The sequence spans 117 residues: UPF0122 protein Cthe_0771 (117 aa).

It belongs to the UPF0122 family.

Might take part in the signal recognition particle (SRP) pathway. This is inferred from the conservation of its genetic proximity to ftsY/ffh. May be a regulatory protein. The sequence is that of UPF0122 protein Cthe_0771 from Acetivibrio thermocellus (strain ATCC 27405 / DSM 1237 / JCM 9322 / NBRC 103400 / NCIMB 10682 / NRRL B-4536 / VPI 7372) (Clostridium thermocellum).